The following is a 663-amino-acid chain: DNA ligase (663 aa).

NAD(+) is bound by residues 33–37 (DYSYD), 82–83 (SI), and E112. The active-site N6-AMP-lysine intermediate is K114. NAD(+) contacts are provided by R135, E171, K285, and K309. C403, C406, C419, and C424 together coordinate Zn(2+). Residues 581–663 (DKEAPLQGKV…SRILDAKSVS (83 aa)) enclose the BRCT domain.

The protein belongs to the NAD-dependent DNA ligase family. LigA subfamily. Mg(2+) serves as cofactor. Requires Mn(2+) as cofactor.

It carries out the reaction NAD(+) + (deoxyribonucleotide)n-3'-hydroxyl + 5'-phospho-(deoxyribonucleotide)m = (deoxyribonucleotide)n+m + AMP + beta-nicotinamide D-nucleotide.. In terms of biological role, DNA ligase that catalyzes the formation of phosphodiester linkages between 5'-phosphoryl and 3'-hydroxyl groups in double-stranded DNA using NAD as a coenzyme and as the energy source for the reaction. It is essential for DNA replication and repair of damaged DNA. In Chlamydia trachomatis serovar L2 (strain ATCC VR-902B / DSM 19102 / 434/Bu), this protein is DNA ligase.